The following is a 256-amino-acid chain: Thiazole synthase (256 aa).

The active-site Schiff-base intermediate with DXP is K95. 1-deoxy-D-xylulose 5-phosphate contacts are provided by residues G156, 182–183 (AG), and 204–205 (NT).

It belongs to the ThiG family. Homotetramer. Forms heterodimers with either ThiH or ThiS.

It localises to the cytoplasm. The enzyme catalyses [ThiS sulfur-carrier protein]-C-terminal-Gly-aminoethanethioate + 2-iminoacetate + 1-deoxy-D-xylulose 5-phosphate = [ThiS sulfur-carrier protein]-C-terminal Gly-Gly + 2-[(2R,5Z)-2-carboxy-4-methylthiazol-5(2H)-ylidene]ethyl phosphate + 2 H2O + H(+). It participates in cofactor biosynthesis; thiamine diphosphate biosynthesis. In terms of biological role, catalyzes the rearrangement of 1-deoxy-D-xylulose 5-phosphate (DXP) to produce the thiazole phosphate moiety of thiamine. Sulfur is provided by the thiocarboxylate moiety of the carrier protein ThiS. In vitro, sulfur can be provided by H(2)S. The polypeptide is Thiazole synthase (Escherichia coli (strain 55989 / EAEC)).